Consider the following 377-residue polypeptide: Opsin-5 (377 aa).

At 1–33 (MALNHTALPQDERLPHYLRDEDPFASKLSWEAD) the chain is on the extracellular side. The N-linked (GlcNAc...) asparagine glycan is linked to asparagine 4. Residues 34–54 (LVAGFYLTIIGILSTFGNGYV) traverse the membrane as a helical segment. The Cytoplasmic segment spans residues 55 to 74 (LYMSSRRKKKLRPAEIMTIN). The helical transmembrane segment at 75–95 (LAVCDLGISVVGKPFTIISCF) threads the bilayer. Residues 96–108 (CHRWVFGWFGCRW) are Extracellular-facing. Cysteine 106 and cysteine 183 are oxidised to a cystine. Residues 109–129 (YGWAGFFFGCGSLITMTAVSL) form a helical membrane-spanning segment. The Cytoplasmic portion of the chain corresponds to 130–150 (DRYLKICYLSYGVWLKRKHAY). The helical transmembrane segment at 151-171 (ICLAVIWAYASFWTTMPLVGL) threads the bilayer. Over 172 to 197 (GDYAPEPFGTSCTLDWWLAQASGGGQ) the chain is Extracellular. A helical membrane pass occupies residues 198–218 (VFILSILFFCLLLPTAVIVFS). Topologically, residues 219 to 252 (YAKIIAKVKSSSKEVAHFDSRIHSSHVLEVKLTK) are cytoplasmic. A helical membrane pass occupies residues 253 to 273 (VAMLICAGFLIAWIPYAVVSV). At 274-288 (WSAFGRPDSIPIQLS) the chain is on the extracellular side. A helical transmembrane segment spans residues 289-309 (VVPTLLAKSAAMYNPIIYQVI). Lysine 296 is modified (N6-(retinylidene)lysine). Topologically, residues 310–377 (DYRFACCQAG…HSNDGDCGKK (68 aa)) are cytoplasmic. 2 S-palmitoyl cysteine lipidation sites follow: cysteine 315 and cysteine 316. Residues 357 to 377 (FTSAHVMDGESHSNDGDCGKK) form a disordered region. The span at 363–377 (MDGESHSNDGDCGKK) shows a compositional bias: basic and acidic residues.

Belongs to the G-protein coupled receptor 1 family. Opsin subfamily. It is uncertain whether Cys-315 or Cys-316 is palmitoylated. In terms of tissue distribution, expressed in the brain (at protein level). Weakly expressed in the skin and liver (at protein level). Abundantly expressed in striated muscle cells. Expressed in Math7/Atok7-dependent retinal ganglion cells in the ganglion cell layer (at protein level). Additionally expressed in horizontal and amacrine cells in the inner nuclear layer of the retina (at protein level). Expressed around the base of hair follicles and in epidermal and sebaceous gland cells of the outer ear (at protein level). Abundantly expressed in vibrissae hair follicles and weakly expressed in the vibrissae skin pad, dorsal back skin, and tail.

The protein resides in the cell membrane. Functionally, G-protein coupled receptor which selectively activates G(i) type G proteins via ultraviolet A (UVA) light-mediated activation in the retina. Preferentially binds the chromophore 11-cis retinal and is a bistable protein that displays emission peaks at 380 nm (UVA light) and 470 nm (blue light). Required for the light-response in the inner plexiform layer, and contributes to the regulation of the light-response in the nerve fiber layer, via phosphorylated DAT/SLC6A3 dopamine uptake. Involved in local corneal and retinal circadian rhythm photoentrainment via modulation of the UVA light-induced phase-shift of the retina clock. Acts as a circadian photoreceptor in the outer ear and vibrissal pads, via modulation of circadian clock-gene expression in response to violet light during the light-to-dark transition phase and night phase of the circadian cycle. Required in the retina to negatively regulate hyaloid vessel regression during postnatal development via light-dependent OPN5-SLC32A1-DRD2-VEGFR2 signaling. Involved in the light-dependent regulation of retina and vitreous compartment dopamine levels. The protein is Opsin-5 (Opn5) of Mus musculus (Mouse).